Reading from the N-terminus, the 1088-residue chain is Probable cellulose synthase A catalytic subunit 9 [UDP-forming] (1088 aa).

M1 bears the N-acetylmethionine mark. Over 1–283 the chain is Cytoplasmic; sequence MNTGGRLIAG…RSSRINPYRM (283 aa). Positions 39, 42, 58, 61, 66, 69, 81, and 84 each coordinate Zn(2+). An RING-type; degenerate zinc finger spans residues 39 to 85; it reads CKICRDEIELTDNGEPFIACNECAFPTCRPCYEYERREGNQACPQCG. Residues 284–304 form a helical membrane-spanning segment; the sequence is LIFCRLAILGLFFHYRILHPV. The Extracellular segment spans residues 305–306; the sequence is ND. The chain crosses the membrane as a helical span at residues 307 to 327; the sequence is AFGLWLTSVICEIWFAVSWIL. The Cytoplasmic portion of the chain corresponds to 328–871; the sequence is DQFPKWYPIE…INSVVYPWTS (544 aa). The UDP-alpha-D-glucose site is built by S366, K372, E373, D402, and K543. Residue D402 is part of the active site. Residues K544 and D568 each contribute to the Mn(2+) site. D788 is a catalytic residue. Residues 872 to 892 traverse the membrane as a helical segment; sequence LPLLVYCSLPAICLLTGKFIV. The Extracellular segment spans residues 893 to 897; that stretch reads PEISN. A helical membrane pass occupies residues 898–918; that stretch reads YAGILFLLMFMSIAVTGILEM. Topologically, residues 919–933 are cytoplasmic; that stretch reads QWGKIGIDDWWRNEQ. A helical membrane pass occupies residues 934-954; sequence FWVIGGVSSHLFALFQGLLKV. Residues 955-983 are Extracellular-facing; it reads LAGVSTNFTVTSKAADDGEFSELYIFKWT. N-linked (GlcNAc...) asparagine glycosylation occurs at N961. The helical transmembrane segment at 984-1004 threads the bilayer; the sequence is SLLIPPTTLLIINIVGVIVGV. The Cytoplasmic segment spans residues 1005 to 1015; that stretch reads SDAINNGYDSW. Residues 1016-1036 traverse the membrane as a helical segment; the sequence is GPLFGRLFFALWVIVHLYPFL. The Extracellular segment spans residues 1037-1045; that stretch reads KGLLGKQDR. Residues 1046-1066 traverse the membrane as a helical segment; sequence VPTIILVWSILLASILTLLWV. Over 1067-1088 the chain is Cytoplasmic; it reads RVNPFVSKDGPVLEICGLDCLK.

This sequence belongs to the glycosyltransferase 2 family. Plant cellulose synthase subfamily. The cofactor is Mn(2+). Zn(2+) is required as a cofactor. As to expression, expressed in young plants, stems and flowers.

It localises to the cell membrane. The enzyme catalyses [(1-&gt;4)-beta-D-glucosyl](n) + UDP-alpha-D-glucose = [(1-&gt;4)-beta-D-glucosyl](n+1) + UDP + H(+). It functions in the pathway glycan metabolism; plant cellulose biosynthesis. Probable catalytic subunit of cellulose synthase terminal complexes ('rosettes'), required for beta-1,4-glucan microfibril crystallization, a major mechanism of the cell wall formation. This is Probable cellulose synthase A catalytic subunit 9 [UDP-forming] from Arabidopsis thaliana (Mouse-ear cress).